Consider the following 351-residue polypeptide: Photosystem II D2 protein (351 aa).

A helical transmembrane segment spans residues 39-59 (TAYLALGGWFTGTTFVTSWYT). H116 is a chlorophyll a binding site. Residues 123-139 (GFMLRQFEIARLVGIRP) traverse the membrane as a helical segment. Pheophytin a contacts are provided by Q128 and N141. The helical transmembrane segment at 151–164 (VFLACFLIYPLGQH) threads the bilayer. H196 is a chlorophyll a binding site. Residues 206–226 (GALLCGIHGATVQNTLFEDGA) form a helical membrane-spanning segment. A plastoquinone is bound by residues H213 and F260. H213 serves as a coordination point for Fe cation. Residue H267 coordinates Fe cation. The helical transmembrane segment at 277–293 (GMWTPSVGIVGLAVNLR) threads the bilayer.

Belongs to the reaction center PufL/M/PsbA/D family. As to quaternary structure, PSII is composed of 1 copy each of membrane proteins PsbA, PsbB, PsbC, PsbD, PsbE, PsbF, PsbH, PsbI, PsbJ, PsbK, PsbL, PsbM, PsbT, PsbX, PsbY, Psb30/Ycf12, peripheral proteins PsbO, CyanoQ (PsbQ), PsbU, PsbV and a large number of cofactors. It forms dimeric complexes. The D1/D2 heterodimer binds P680, chlorophylls that are the primary electron donor of PSII, and subsequent electron acceptors. It shares a non-heme iron and each subunit binds pheophytin, quinone, additional chlorophylls, carotenoids and lipids. There is also a Cl(-1) ion associated with D1 and D2, which is required for oxygen evolution. The PSII complex binds additional chlorophylls, carotenoids and specific lipids. serves as cofactor.

It is found in the cellular thylakoid membrane. It catalyses the reaction 2 a plastoquinone + 4 hnu + 2 H2O = 2 a plastoquinol + O2. Functionally, photosystem II (PSII) is a light-driven water:plastoquinone oxidoreductase that uses light energy to abstract electrons from H(2)O, generating O(2) and a proton gradient subsequently used for ATP formation. It consists of a core antenna complex that captures photons, and an electron transfer chain that converts photonic excitation into a charge separation. The D1/D2 (PsbA/PsbD) reaction center heterodimer binds P680, the primary electron donor of PSII as well as several subsequent electron acceptors. D2 is needed for assembly of a stable PSII complex. This Prochlorococcus marinus (strain MIT 9313) protein is Photosystem II D2 protein.